The following is a 239-amino-acid chain: 1-(5-phosphoribosyl)-5-[(5-phosphoribosylamino)methylideneamino] imidazole-4-carboxamide isomerase (239 aa).

D8 functions as the Proton acceptor in the catalytic mechanism. D129 functions as the Proton donor in the catalytic mechanism.

Belongs to the HisA/HisF family.

Its subcellular location is the cytoplasm. It carries out the reaction 1-(5-phospho-beta-D-ribosyl)-5-[(5-phospho-beta-D-ribosylamino)methylideneamino]imidazole-4-carboxamide = 5-[(5-phospho-1-deoxy-D-ribulos-1-ylimino)methylamino]-1-(5-phospho-beta-D-ribosyl)imidazole-4-carboxamide. It participates in amino-acid biosynthesis; L-histidine biosynthesis; L-histidine from 5-phospho-alpha-D-ribose 1-diphosphate: step 4/9. This is 1-(5-phosphoribosyl)-5-[(5-phosphoribosylamino)methylideneamino] imidazole-4-carboxamide isomerase from Cereibacter sphaeroides (strain ATCC 17029 / ATH 2.4.9) (Rhodobacter sphaeroides).